The following is a 1264-amino-acid chain: ATP-dependent helicase/nuclease subunit A (1264 aa).

Residues 12–482 (EQFTDSQWQA…IILAENFRSR (471 aa)) enclose the UvrD-like helicase ATP-binding domain. 33–40 (ASAGSGKT) provides a ligand contact to ATP. Positions 520–808 (SEAADYSTEL…RVMTIHASKG (289 aa)) constitute a UvrD-like helicase C-terminal domain.

Belongs to the helicase family. AddA subfamily. Heterodimer of AddA and AddB/RexB. Mg(2+) is required as a cofactor.

The catalysed reaction is Couples ATP hydrolysis with the unwinding of duplex DNA by translocating in the 3'-5' direction.. It catalyses the reaction ATP + H2O = ADP + phosphate + H(+). Functionally, the heterodimer acts as both an ATP-dependent DNA helicase and an ATP-dependent, dual-direction single-stranded exonuclease. Recognizes the chi site generating a DNA molecule suitable for the initiation of homologous recombination. The AddA nuclease domain is required for chi fragment generation; this subunit has the helicase and 3' -&gt; 5' nuclease activities. This is ATP-dependent helicase/nuclease subunit A from Enterococcus faecalis (strain ATCC 700802 / V583).